We begin with the raw amino-acid sequence, 42 residues long: Photosystem I reaction center subunit IX (42 aa).

The helical transmembrane segment at 8-28 (YLSTAPVLLTIWLSFTAALVI) threads the bilayer.

The protein belongs to the PsaJ family.

The protein localises to the plastid. It is found in the chloroplast thylakoid membrane. May help in the organization of the PsaE and PsaF subunits. This chain is Photosystem I reaction center subunit IX, found in Guillardia theta (Cryptophyte).